Consider the following 131-residue polypeptide: D-ribose pyranase (131 aa).

Residue His-20 is the Proton donor of the active site. Residues Asp-28, His-98, and Tyr-120–Asn-122 contribute to the substrate site.

This sequence belongs to the RbsD / FucU family. RbsD subfamily. Homodecamer.

Its subcellular location is the cytoplasm. It carries out the reaction beta-D-ribopyranose = beta-D-ribofuranose. It functions in the pathway carbohydrate metabolism; D-ribose degradation; D-ribose 5-phosphate from beta-D-ribopyranose: step 1/2. Catalyzes the interconversion of beta-pyran and beta-furan forms of D-ribose. The sequence is that of D-ribose pyranase from Lactobacillus gasseri (strain ATCC 33323 / DSM 20243 / BCRC 14619 / CIP 102991 / JCM 1131 / KCTC 3163 / NCIMB 11718 / NCTC 13722 / AM63).